The following is a 106-amino-acid chain: Nucleoid-associated protein Nham_0463 (106 aa).

The protein belongs to the YbaB/EbfC family. Homodimer.

The protein resides in the cytoplasm. Its subcellular location is the nucleoid. Functionally, binds to DNA and alters its conformation. May be involved in regulation of gene expression, nucleoid organization and DNA protection. This Nitrobacter hamburgensis (strain DSM 10229 / NCIMB 13809 / X14) protein is Nucleoid-associated protein Nham_0463.